Consider the following 201-residue polypeptide: Ras-related protein Rab-1B (201 aa).

M1 carries the N-acetylmethionine modification. Positions 17, 18, 19, 20, 21, 22, 23, 33, 34, 35, 36, 39, and 40 each coordinate GTP. S22 is a Mg(2+) binding site. Positions 30–45 (DDTYTESYISTIGVDF) match the Switch 1 motif. Residues T40 and D63 each contribute to the Mg(2+) site. The tract at residues 64–83 (TAGQERFRTITSSYYRGAHG) is switch 2 region; required for interaction with REP1/CHM. Residues 65 to 80 (AGQERFRTITSSYYRG) carry the Switch 2 motif. GTP contacts are provided by G66, N121, K122, D124, S151, A152, and K153. The tract at residues 174-201 (GPGAASGGERPNLKIDSTPVKPASGGCC) is disordered. S-geranylgeranyl cysteine attachment occurs at residues C200 and C201. The residue at position 201 (C201) is a Cysteine methyl ester.

The protein belongs to the small GTPase superfamily. Rab family. As to quaternary structure, interacts with MICAL1 and MICAL2. Interacts (GTP-bound form) with MICALCL, MICAL1 and MILCAL3. Interacts with GDI1; the interaction requires the GDP-bound state. Interacts with CHM/REP1; the interaction requires the GDP-bound form and is necessary for prenylation by GGTase II. Interacts with RabGAP TBC1D20. Interacts (in GDP-bound form) with lipid phosphatase MTMR6 (via GRAM domain); the interaction regulates MTMR6 recruitment to the endoplasmic reticulum-Golgi intermediate compartment. Interacts (in GDP-bound form) with lipid phosphatase MTMR7. It depends on Mg(2+) as a cofactor. Prenylated; by GGTase II, only after interaction of the substrate with Rab escort protein 1 (REP1).

It localises to the cytoplasm. Its subcellular location is the membrane. The protein resides in the preautophagosomal structure membrane. The protein localises to the perinuclear region. The enzyme catalyses GTP + H2O = GDP + phosphate + H(+). With respect to regulation, regulated by guanine nucleotide exchange factors (GEFs) which promote the exchange of bound GDP for free GTP. Regulated by GTPase activating proteins (GAPs) including TBC1D20 which increases the GTP hydrolysis activity. Inhibited by GDP dissociation inhibitors (GDIs). Functionally, the small GTPases Rab are key regulators of intracellular membrane trafficking, from the formation of transport vesicles to their fusion with membranes. Rabs cycle between an inactive GDP-bound form and an active GTP-bound form that is able to recruit to membranes different set of downstream effectors directly responsible for vesicle formation, movement, tethering and fusion. Plays a role in the initial events of the autophagic vacuole development which take place at specialized regions of the endoplasmic reticulum. Regulates vesicular transport between the endoplasmic reticulum and successive Golgi compartments. Required to modulate the compacted morphology of the Golgi. Promotes the recruitment of lipid phosphatase MTMR6 to the endoplasmic reticulum-Golgi intermediate compartment. The polypeptide is Ras-related protein Rab-1B (Rab1b) (Mus musculus (Mouse)).